We begin with the raw amino-acid sequence, 323 residues long: Acetyl-coenzyme A carboxylase carboxyl transferase subunit alpha (323 aa).

The 254-residue stretch at 40–293 (LSEKSLQLTK…RKALSDSLKT (254 aa)) folds into the CoA carboxyltransferase C-terminal domain.

The protein belongs to the AccA family. As to quaternary structure, acetyl-CoA carboxylase is a heterohexamer composed of biotin carboxyl carrier protein (AccB), biotin carboxylase (AccC) and two subunits each of ACCase subunit alpha (AccA) and ACCase subunit beta (AccD).

It localises to the cytoplasm. The catalysed reaction is N(6)-carboxybiotinyl-L-lysyl-[protein] + acetyl-CoA = N(6)-biotinyl-L-lysyl-[protein] + malonyl-CoA. It functions in the pathway lipid metabolism; malonyl-CoA biosynthesis; malonyl-CoA from acetyl-CoA: step 1/1. In terms of biological role, component of the acetyl coenzyme A carboxylase (ACC) complex. First, biotin carboxylase catalyzes the carboxylation of biotin on its carrier protein (BCCP) and then the CO(2) group is transferred by the carboxyltransferase to acetyl-CoA to form malonyl-CoA. The chain is Acetyl-coenzyme A carboxylase carboxyl transferase subunit alpha from Polynucleobacter asymbioticus (strain DSM 18221 / CIP 109841 / QLW-P1DMWA-1) (Polynucleobacter necessarius subsp. asymbioticus).